The following is a 246-amino-acid chain: Aspartate/glutamate leucyltransferase (246 aa).

The protein belongs to the R-transferase family. Bpt subfamily.

The protein localises to the cytoplasm. It catalyses the reaction N-terminal L-glutamyl-[protein] + L-leucyl-tRNA(Leu) = N-terminal L-leucyl-L-glutamyl-[protein] + tRNA(Leu) + H(+). It carries out the reaction N-terminal L-aspartyl-[protein] + L-leucyl-tRNA(Leu) = N-terminal L-leucyl-L-aspartyl-[protein] + tRNA(Leu) + H(+). In terms of biological role, functions in the N-end rule pathway of protein degradation where it conjugates Leu from its aminoacyl-tRNA to the N-termini of proteins containing an N-terminal aspartate or glutamate. The chain is Aspartate/glutamate leucyltransferase from Rhodospirillum rubrum (strain ATCC 11170 / ATH 1.1.1 / DSM 467 / LMG 4362 / NCIMB 8255 / S1).